The sequence spans 116 residues: MNTVRVTFLLVFVLAVSLGQADKDENRMEMQEKTEQGKSYLDFAENLLLQKLEELEAKLLEEDSEESRNSRQKRCIGEGVPCDENDPRCCSGLVCLKPTLHGIWYKSYYCYKKRSA.

The signal sequence occupies residues 1–21 (MNTVRVTFLLVFVLAVSLGQA). A propeptide spanning residues 22 to 74 (DKDENRMEMQEKTEQGKSYLDFAENLLLQKLEELEAKLLEEDSEESRNSRQKR) is cleaved from the precursor. Positions 60-69 (LEEDSEESRN) are enriched in basic and acidic residues. The interval 60 to 83 (LEEDSEESRNSRQKRCIGEGVPCD) is disordered. 3 disulfide bridges follow: Cys-75-Cys-90, Cys-82-Cys-95, and Cys-89-Cys-110.

This sequence belongs to the neurotoxin 14 (magi-1) family. 01 (HNTX-16) subfamily. As to expression, expressed by the venom gland.

The protein resides in the secreted. Probable ion channel inhibitor. This Cyriopagopus hainanus (Chinese bird spider) protein is U11-theraphotoxin-Hhn1b.